The primary structure comprises 521 residues: Bifunctional purine biosynthesis protein PurH (521 aa).

Residues 1-147 (MAVIKRALIS…KNNRDVTVVV (147 aa)) enclose the MGS-like domain.

Belongs to the PurH family.

The catalysed reaction is (6R)-10-formyltetrahydrofolate + 5-amino-1-(5-phospho-beta-D-ribosyl)imidazole-4-carboxamide = 5-formamido-1-(5-phospho-D-ribosyl)imidazole-4-carboxamide + (6S)-5,6,7,8-tetrahydrofolate. It carries out the reaction IMP + H2O = 5-formamido-1-(5-phospho-D-ribosyl)imidazole-4-carboxamide. Its pathway is purine metabolism; IMP biosynthesis via de novo pathway; 5-formamido-1-(5-phospho-D-ribosyl)imidazole-4-carboxamide from 5-amino-1-(5-phospho-D-ribosyl)imidazole-4-carboxamide (10-formyl THF route): step 1/1. The protein operates within purine metabolism; IMP biosynthesis via de novo pathway; IMP from 5-formamido-1-(5-phospho-D-ribosyl)imidazole-4-carboxamide: step 1/1. The protein is Bifunctional purine biosynthesis protein PurH of Syntrophotalea carbinolica (strain DSM 2380 / NBRC 103641 / GraBd1) (Pelobacter carbinolicus).